A 317-amino-acid polypeptide reads, in one-letter code: Acetyl-coenzyme A carboxylase carboxyl transferase subunit alpha (317 aa).

The region spanning 39–293 (RLESKAAAAL…EEAIAEGLAG (255 aa)) is the CoA carboxyltransferase C-terminal domain.

It belongs to the AccA family. Acetyl-CoA carboxylase is a heterohexamer composed of biotin carboxyl carrier protein (AccB), biotin carboxylase (AccC) and two subunits each of ACCase subunit alpha (AccA) and ACCase subunit beta (AccD).

The protein localises to the cytoplasm. The catalysed reaction is N(6)-carboxybiotinyl-L-lysyl-[protein] + acetyl-CoA = N(6)-biotinyl-L-lysyl-[protein] + malonyl-CoA. It functions in the pathway lipid metabolism; malonyl-CoA biosynthesis; malonyl-CoA from acetyl-CoA: step 1/1. Its function is as follows. Component of the acetyl coenzyme A carboxylase (ACC) complex. First, biotin carboxylase catalyzes the carboxylation of biotin on its carrier protein (BCCP) and then the CO(2) group is transferred by the carboxyltransferase to acetyl-CoA to form malonyl-CoA. The protein is Acetyl-coenzyme A carboxylase carboxyl transferase subunit alpha of Methylobacterium sp. (strain 4-46).